The primary structure comprises 318 residues: Inactive dihydropteroate synthase 2 (318 aa).

Residues Met1–Ala25 are disordered. The Pterin-binding domain maps to Ala42 to Glu299.

This sequence belongs to the DHPS family. In terms of assembly, homodimer.

In terms of biological role, has very low affinity for the DHPS substrate 6-hydroxymethyl-7,8-dihydropterin-pyrophosphate, but can bind the inhibitor dapsone. Seems to lack dihydropteroate synthase activity, and does probably not function in folate metabolism. This is Inactive dihydropteroate synthase 2 (folP2) from Mycobacterium bovis (strain ATCC BAA-935 / AF2122/97).